Reading from the N-terminus, the 112-residue chain is MLDFLRVTGLFFVTAVAEIVGCYLPWLVLTQGRSAWLLVPAAASLAVFAWLLTLHPSAAGRTYAAYGGVYVVVALLWLWRVDGVVPTRWDLVGGAICLAGMAIIALQPRAAS.

A run of 4 helical transmembrane segments spans residues 9–29 (GLFF…WLVL), 34–54 (SAWL…LLTL), 65–85 (AYGG…DGVV), and 91–111 (LVGG…PRAA).

Belongs to the UPF0060 family.

The protein localises to the cell inner membrane. This is UPF0060 membrane protein Mpe_A1656 from Methylibium petroleiphilum (strain ATCC BAA-1232 / LMG 22953 / PM1).